The following is a 434-amino-acid chain: Serine/threonine transporter SstT (434 aa).

The next 9 membrane-spanning stretches (helical) occupy residues 14 to 34 (IVIG…WSFI), 41 to 61 (FVGA…MSAI), 72 to 92 (FGTV…AAVA), 135 to 155 (ALVE…GSGL), 172 to 192 (TVSA…VGLL), 210 to 230 (LLML…PFMV), 282 to 302 (ISIP…VSIM), 316 to 336 (IFLA…VSGI), and 351 to 371 (FGIS…IGVV). Residues 414–434 (KGTAEVVTPEKANEAEESEQV) form a disordered region.

It belongs to the dicarboxylate/amino acid:cation symporter (DAACS) (TC 2.A.23) family.

The protein localises to the cell membrane. It carries out the reaction L-serine(in) + Na(+)(in) = L-serine(out) + Na(+)(out). The enzyme catalyses L-threonine(in) + Na(+)(in) = L-threonine(out) + Na(+)(out). Its function is as follows. Involved in the import of serine and threonine into the cell, with the concomitant import of sodium (symport system). This Lacticaseibacillus paracasei (strain ATCC 334 / BCRC 17002 / CCUG 31169 / CIP 107868 / KCTC 3260 / NRRL B-441) (Lactobacillus paracasei) protein is Serine/threonine transporter SstT.